The chain runs to 110 residues: Body wall hemoglobin (110 aa).

In terms of domain architecture, Globin spans 2 to 110; sequence VNWAAVVDAF…GAVDAIISHF (109 aa). Position 70 (His-70) interacts with heme.

This sequence belongs to the globin family. As to quaternary structure, homotetramer.

In Cerebratulus lacteus (Milky ribbon worm), this protein is Body wall hemoglobin.